We begin with the raw amino-acid sequence, 185 residues long: Elongation factor P (185 aa).

This sequence belongs to the elongation factor P family.

Its subcellular location is the cytoplasm. Its pathway is protein biosynthesis; polypeptide chain elongation. In terms of biological role, involved in peptide bond synthesis. Stimulates efficient translation and peptide-bond synthesis on native or reconstituted 70S ribosomes in vitro. Probably functions indirectly by altering the affinity of the ribosome for aminoacyl-tRNA, thus increasing their reactivity as acceptors for peptidyl transferase. The chain is Elongation factor P from Moorella thermoacetica (strain ATCC 39073 / JCM 9320).